A 90-amino-acid polypeptide reads, in one-letter code: DNA-directed RNA polymerase subunit omega (90 aa).

The segment at 69 to 90 is disordered; sequence RQEQQEQDAAELAAVSSITHNR.

Belongs to the RNA polymerase subunit omega family. As to quaternary structure, the RNAP catalytic core consists of 2 alpha, 1 beta, 1 beta' and 1 omega subunit. When a sigma factor is associated with the core the holoenzyme is formed, which can initiate transcription.

The enzyme catalyses RNA(n) + a ribonucleoside 5'-triphosphate = RNA(n+1) + diphosphate. Promotes RNA polymerase assembly. Latches the N- and C-terminal regions of the beta' subunit thereby facilitating its interaction with the beta and alpha subunits. This Aliivibrio fischeri (strain ATCC 700601 / ES114) (Vibrio fischeri) protein is DNA-directed RNA polymerase subunit omega.